The chain runs to 382 residues: Putative acetyl-CoA C-acetyltransferase VraB (382 aa).

The active-site Acyl-thioester intermediate is the cysteine 86. Residue histidine 338 is the Proton acceptor of the active site.

It belongs to the thiolase-like superfamily. Thiolase family.

This Staphylococcus epidermidis (strain ATCC 12228 / FDA PCI 1200) protein is Putative acetyl-CoA C-acetyltransferase VraB (vraB).